We begin with the raw amino-acid sequence, 354 residues long: GTPase Obg (354 aa).

One can recognise an Obg domain in the interval 1 to 159 (MKFVDEVKIH…RDLVLELKLL (159 aa)). In terms of domain architecture, OBG-type G spans 160–333 (ADVGIVGYPN…LLDAVGRALF (174 aa)). Residues 166-173 (GYPNAGKS), 191-195 (FTTLT), 212-215 (DIPG), 283-286 (TKID), and 314-316 (SAV) contribute to the GTP site. Positions 173 and 193 each coordinate Mg(2+).

It belongs to the TRAFAC class OBG-HflX-like GTPase superfamily. OBG GTPase family. Monomer. Requires Mg(2+) as cofactor.

It is found in the cytoplasm. Its function is as follows. An essential GTPase which binds GTP, GDP and possibly (p)ppGpp with moderate affinity, with high nucleotide exchange rates and a fairly low GTP hydrolysis rate. Plays a role in control of the cell cycle, stress response, ribosome biogenesis and in those bacteria that undergo differentiation, in morphogenesis control. The protein is GTPase Obg of Anaeromyxobacter sp. (strain K).